A 138-amino-acid polypeptide reads, in one-letter code: Cysteine desulfuration protein SufE (138 aa).

The active-site Cysteine persulfide intermediate is C51.

The protein belongs to the SufE family. As to quaternary structure, homodimer. Interacts with SufS.

It localises to the cytoplasm. It participates in cofactor biosynthesis; iron-sulfur cluster biosynthesis. Functionally, participates in cysteine desulfuration mediated by SufS. Cysteine desulfuration mobilizes sulfur from L-cysteine to yield L-alanine and constitutes an essential step in sulfur metabolism for biosynthesis of a variety of sulfur-containing biomolecules. Functions as a sulfur acceptor for SufS, by mediating the direct transfer of the sulfur atom from the S-sulfanylcysteine of SufS, an intermediate product of cysteine desulfuration process. This Pectobacterium atrosepticum (strain SCRI 1043 / ATCC BAA-672) (Erwinia carotovora subsp. atroseptica) protein is Cysteine desulfuration protein SufE.